A 259-amino-acid chain; its full sequence is Pimeloyl-[acyl-carrier protein] methyl ester esterase (259 aa).

Residues 16-244 (LVFIHGWGLN…ASHAPFLSHP (229 aa)) form the AB hydrolase-1 domain. Residues tryptophan 22, 82–83 (SL), and 143–147 (FFNIQ) contribute to the substrate site. Serine 82 (nucleophile) is an active-site residue. Catalysis depends on residues aspartate 207 and histidine 237. Substrate is bound at residue histidine 237.

The protein belongs to the AB hydrolase superfamily. Carboxylesterase BioH family. As to quaternary structure, monomer.

It localises to the cytoplasm. It carries out the reaction 6-carboxyhexanoyl-[ACP] methyl ester + H2O = 6-carboxyhexanoyl-[ACP] + methanol + H(+). Its pathway is cofactor biosynthesis; biotin biosynthesis. The physiological role of BioH is to remove the methyl group introduced by BioC when the pimeloyl moiety is complete. It allows to synthesize pimeloyl-ACP via the fatty acid synthetic pathway through the hydrolysis of the ester bonds of pimeloyl-ACP esters. In Wigglesworthia glossinidia brevipalpis, this protein is Pimeloyl-[acyl-carrier protein] methyl ester esterase.